The sequence spans 417 residues: Autophagy-related protein 18 (417 aa).

WD repeat units lie at residues 1–36 (MAMN…KSYE), 69–114 (KRQS…LLYT), 139–182 (PLPQ…AINV), 185–225 (AHRS…KLYQ), 230–269 (SMPS…SSSR), 312–358 (KHNG…AWIK), and 370–410 (GNNG…GGEG). Residues 226-230 (FRRGS) carry the L/FRRG motif motif. The tract at residues 261–314 (LSQQTSSSRDTSPSSSTPAGRDRAFSQSSLGHSPDRSDVSGEPDSSEFPARKHN) is disordered. Low complexity predominate over residues 262–278 (SQQTSSSRDTSPSSSTP).

It belongs to the WD repeat PROPPIN family. Component of the PI(3,5)P2 regulatory complex.

It is found in the preautophagosomal structure membrane. Its subcellular location is the vacuole membrane. The protein localises to the endosome membrane. Its function is as follows. The PI(3,5)P2 regulatory complex regulates both the synthesis and turnover of phosphatidylinositol 3,5-bisphosphate (PtdIns(3,5)P2). Necessary for proper vacuole morphology. Plays an important role in osmotically-induced vacuole fragmentation. Required for cytoplasm to vacuole transport (Cvt) vesicle formation, pexophagy and starvation-induced autophagy. Involved in correct atg9 trafficking to the pre-autophagosomal structure. Might also be involved in premeiotic DNA replication. This chain is Autophagy-related protein 18 (atg18), found in Aspergillus clavatus (strain ATCC 1007 / CBS 513.65 / DSM 816 / NCTC 3887 / NRRL 1 / QM 1276 / 107).